The primary structure comprises 184 residues: Tyrosine-protein kinase receptor Tie-1 (184 aa).

One can recognise a Protein kinase domain in the interval 1-164 (QLLQFAADVA…RMQEARKAYV (164 aa)). Residue aspartate 25 is the Proton acceptor of the active site. Tyrosine 53 is subject to Phosphotyrosine; by autocatalysis.

Belongs to the protein kinase superfamily. Tyr protein kinase family. Tie subfamily. As to quaternary structure, interacts with svep1. As to expression, expressed in most populations of endothelial cells in 24 hours embryos, including the endocardium.

The protein resides in the cell membrane. The catalysed reaction is L-tyrosyl-[protein] + ATP = O-phospho-L-tyrosyl-[protein] + ADP + H(+). Its function is as follows. Transmembrane tyrosine-protein kinase. Required for the formation of facial lymphatic structures and brain lymphatic endothelial cells. Also required for embryonic ventral and dorsal migration of parachordal lymphoblasts along the arterial intersegmental vessel. Plays a role in the embryonic formation of the dorsal longitudinal anastomotic vessel. The sequence is that of Tyrosine-protein kinase receptor Tie-1 (tie1) from Danio rerio (Zebrafish).